The following is a 122-amino-acid chain: Protein FAM223A (122 aa).

This sequence belongs to the FAM223 family.

This chain is Protein FAM223A (FAM223A), found in Homo sapiens (Human).